The chain runs to 494 residues: Probable malate:quinone oxidoreductase (494 aa).

It belongs to the MQO family. Requires FAD as cofactor.

It carries out the reaction (S)-malate + a quinone = a quinol + oxaloacetate. It participates in carbohydrate metabolism; tricarboxylic acid cycle; oxaloacetate from (S)-malate (quinone route): step 1/1. The chain is Probable malate:quinone oxidoreductase from Helicobacter hepaticus (strain ATCC 51449 / 3B1).